A 114-amino-acid polypeptide reads, in one-letter code: Transmembrane protein 14B (114 aa).

The next 4 membrane-spanning stretches (helical) occupy residues 8–28 (LVPLHWFGFGYTALVVSGGIV), 34–54 (GSVPSLAAGLLFGSLAGLGAY), 60–80 (PRNVWGFLAATSVTFVGVMGM), and 83–103 (YYYGKFMPVGLIAGASLLMAA).

Belongs to the TMEM14 family. As to quaternary structure, interacts with IQGAP1; this interaction promotes phosphorylation and nuclear translocation of IQGAP1. In terms of tissue distribution, mainly expressed in the outer subventricular zone (OSVZ) of the fetal brains.

The protein localises to the membrane. Its function is as follows. Primate-specific protein involved in cortical expansion and folding in the developing neocortex. May drive neural progenitor proliferation through nuclear translocation of IQGAP1, which in turn promotes G1/S cell cycle transitions. The polypeptide is Transmembrane protein 14B (TMEM14B) (Homo sapiens (Human)).